Reading from the N-terminus, the 511-residue chain is 2,3-bisphosphoglycerate-independent phosphoglycerate mutase (511 aa).

A Mn(2+)-binding site is contributed by Asp-12. Tyr-36 is subject to Phosphotyrosine. Residue Ser-62 coordinates Mn(2+). The active-site Phosphoserine intermediate is Ser-62. Residues His-123, 153-154 (RD), Arg-185, Arg-191, 261-264 (RPDR), and Lys-336 contribute to the substrate site. Residues Asp-403, His-407, Asp-444, His-445, and His-462 each contribute to the Mn(2+) site.

Belongs to the BPG-independent phosphoglycerate mutase family. As to quaternary structure, monomer. Requires Mn(2+) as cofactor.

The enzyme catalyses (2R)-2-phosphoglycerate = (2R)-3-phosphoglycerate. The protein operates within carbohydrate degradation; glycolysis; pyruvate from D-glyceraldehyde 3-phosphate: step 3/5. In terms of biological role, essential for rapid growth and for sporulation. Catalyzes the interconversion of 2-phosphoglycerate and 3-phosphoglycerate. The protein is 2,3-bisphosphoglycerate-independent phosphoglycerate mutase of Bacillus velezensis (strain DSM 23117 / BGSC 10A6 / LMG 26770 / FZB42) (Bacillus amyloliquefaciens subsp. plantarum).